Reading from the N-terminus, the 121-residue chain is Large ribosomal subunit protein uL14c (121 aa).

The protein belongs to the universal ribosomal protein uL14 family. In terms of assembly, part of the 50S ribosomal subunit.

The protein resides in the plastid. It localises to the chloroplast. Functionally, binds to 23S rRNA. This is Large ribosomal subunit protein uL14c from Phaeodactylum tricornutum (strain CCAP 1055/1).